The following is a 272-amino-acid chain: Adenylate kinase (272 aa).

Residue 55–60 (GAGKGT) participates in ATP binding. Residues 75–104 (ATGDMLRSQVAKKTPLGKEAKKIMDQGGLV) are NMP. AMP-binding positions include T76, R81, 102-104 (GLV), 131-134 (GFPR), and Q138. The segment at 172–209 (GRLVHPASGRSYHKIFNPPKQDMKDDITGEPLIQRSDD) is LID. Residues R173 and 182–183 (SY) contribute to the ATP site. AMP-binding residues include R206 and R217. Position 245 (Q245) interacts with ATP.

Belongs to the adenylate kinase family. AK2 subfamily. As to quaternary structure, monomer.

The protein localises to the cytoplasm. It localises to the cytosol. The protein resides in the mitochondrion intermembrane space. The catalysed reaction is AMP + ATP = 2 ADP. In terms of biological role, catalyzes the reversible transfer of the terminal phosphate group between ATP and AMP. Plays an important role in cellular energy homeostasis and in adenine nucleotide metabolism. Adenylate kinase activity is critical for regulation of the phosphate utilization and the AMP de novo biosynthesis pathways. The sequence is that of Adenylate kinase (adk1) from Talaromyces marneffei (Penicillium marneffei).